Reading from the N-terminus, the 364-residue chain is MAQQTPLYEQHTLCGARMVDFHGWMMPLHYGSQLDEHHAVRTDAGMFDVSHMTIVDLRGSRTREFLRYLLANDVAKLTKTGKALYSGMLNASGGVIDDLIVYYFTEDFFRLVVNSATREKDLSWITQHAEPYAIDITVRDDLSLIAVQGPNAQAKAATLFTEEQRKAVEGMKPFFGVQAGDLFIATTGYTGEAGYEIAMPNEKAADFWRALVESGVKPCGLGARDTLRLEAGMNLYGQEMDEGVSPLAANMGWTIAWEPADRDFIGREALEVQREKGTEQLVGLVMTEKGVLRNELPVRFTDAQGNQLEGVITSGTFSPTLGYSIALARVPAGIGETAIVQIRNREMPVKVTKPVFVRNGKAVA.

It belongs to the GcvT family. As to quaternary structure, the glycine cleavage system is composed of four proteins: P, T, L and H.

It carries out the reaction N(6)-[(R)-S(8)-aminomethyldihydrolipoyl]-L-lysyl-[protein] + (6S)-5,6,7,8-tetrahydrofolate = N(6)-[(R)-dihydrolipoyl]-L-lysyl-[protein] + (6R)-5,10-methylene-5,6,7,8-tetrahydrofolate + NH4(+). Its function is as follows. The glycine cleavage system catalyzes the degradation of glycine. In Citrobacter koseri (strain ATCC BAA-895 / CDC 4225-83 / SGSC4696), this protein is Aminomethyltransferase.